Reading from the N-terminus, the 375-residue chain is MAGSQIKIPLPKPPDSDSQRLNAFPVIMAQEGKGRLLRQIRLRKILSGDPSDQQITFVNTYGFIRATPETSEFISESSQQKVTPVVTACMLSFGAGPVLEDPQHMLKALDQTDIRVRKTASDKEQILFEINRIPNLFRHHQISADHLIQASSDKYVKSPAKLIAGVNYIYCVTFLSVTVCSASLKFRVARPLLAARSRLVRAVQMEVLLRVTCKKDSQMAKSMLSDPDGEGCIASVWFHLCNLCKGRNKLRSYDENYFASKCRKMNLTVSIGDMWGPTILVHAGGHIPTTAKPFFNSRGWVCHPIHQSSPSLAKTLWSSGCEIKAASAILQGSDYASLAKTDDIIYSKIKVDKDAANYKGVSWSPFRKSASMSNL.

The protein belongs to the morbillivirus/respirovirus/rubulavirus M protein family.

The protein localises to the virion. In terms of biological role, the M protein has a crucial role in virus assembly and interacts with the RNP complex as well as with the viral membrane. The protein is Matrix protein (M) of Homo sapiens (Human).